The primary structure comprises 1000 residues: MLEARVDMLSSNMIISGPAADLGAKEASRPWKKQLNSVPNSGPSARARAQPQPLSIKDKISKWEGKKEPPASDPARQTDGQEDHLPSCKVERRGSELTRTKNGMRLETERLQNDSRARTVCQDTEQLPGPRPIDGQPELSQHRGRELKPSDLRFQSDHLSVLRQVKRLEKALKDGSAGLDPQMPGTCYSPHCLPDKTEEDLPSLESHEKGGVLAAGRRAHHLEVREPGPEISEDWKGQESVYRGSRWYPPKPFINPVPKPRRTFKHAGEGDKDVSPGISFKKEKRNLPPLPSLPPPPPPLPSSPPPTSVNRRLWTGRQRPSADHRKSYEFEDLLQSSSENSRVDWYAQTKLGLTRTLSEENVYEDILDPPMKENPYEDVELHGRCLGKKCVLTFPASPTSSIPDTSTKQSLSKSAFFRQNSERRNLKLLDTRKLSRDGAGSPLRTSPPSTPSSPDDTFFNLGDLQNGRKKKKIPRLVLRINAIYEARRGKKRVKRLSQSTESNSGKVTDENSESDSDTEEKLKAHSQRLVNVKSRLKQAPRYSSLDRDLIEYQERQLFEYFVVVSLHKKQAGAAYVPELTQQFPLKLEKSFKFMREAEDQLKAIPQFCFPDAKDWAPVQEFTSETFSFVLTGEDGSRRFGYCRRLLPGGKGKRLPEVYCIVSRLGCFSLFSKILDEVEKRRGISPALVQPLMRSVMEAPFPALGKTIIVKNFLPGSGTEVIELCRPLDSRLEHVDFESLFSSLSVRHLVSVFASLLLERRVIFIADKLSTLSKCCHAMVALIYPFSWQHTYIPVLPPAMIDIVCSPTPFLIGLLSSSLPLLRELPLEEVLVVDLINDRFLRQMEDEDSILPRKLQVALEHILEQRNDLACDQDGGPLDCVHGPESSSLSEVVSEAFVRFFVEIVGHYPLFLTSGEERSLQREAFRKAVSSKSLRRFLEVFMETQTFRGFIQERELRRQDAKGLFEVRAQEYLETLPSGEHSGVNKFLKGLGNKMKFLHKK.

Disordered regions lie at residues 1 to 155 (MLEA…LRFQ), 174 to 328 (DGSA…RKSY), 427 to 464 (KLLDTRKLSRDGAGSPLRTSPPSTPSSPDDTFFNLGDL), and 491 to 525 (KRVKRLSQSTESNSGKVTDENSESDSDTEEKLKAH). Residues 34–43 (QLNSVPNSGP) are compositionally biased toward polar residues. Basic and acidic residues-rich tracts occupy residues 56–70 (IKDKISKWEGKKEPP), 79–117 (DGQEDHLPSCKVERRGSELTRTKNGMRLETERLQNDSRA), 140–155 (SQHRGRELKPSDLRFQ), and 221–237 (HLEVREPGPEISEDWKG). 2 stretches are compositionally biased toward pro residues: residues 249–258 (PPKPFINPVP) and 288–307 (PPLPSLPPPPPPLPSSPPPT). The span at 427–436 (KLLDTRKLSR) shows a compositional bias: basic and acidic residues. The segment covering 496–506 (LSQSTESNSGK) has biased composition (polar residues). A Phosphoserine modification is found at S544. Residues 559–708 (EYFVVVSLHK…PFPALGKTII (150 aa)) form the uDENN domain. Residues 730–863 (RLEHVDFESL…LQVALEHILE (134 aa)) form the cDENN domain. In terms of domain architecture, dDENN spans 865 to 960 (RNDLACDQDG…QERELRRQDA (96 aa)).

The protein resides in the cytoplasm. It is found in the cytoskeleton. Functionally, guanine nucleotide exchange factor (GEF) which may activate RAB9A and RAB9B. Promotes the exchange of GDP to GTP, converting inactive GDP-bound Rab proteins into their active GTP-bound form. May play a role in late endosomes back to trans-Golgi network/TGN transport. The protein is DENN domain-containing protein 2A (Dennd2a) of Mus musculus (Mouse).